The sequence spans 333 residues: Abequosyltransferase RfbV (333 aa).

Belongs to the glycosyltransferase 2 family.

The enzyme catalyses CDP-alpha-D-abequose + alpha-D-Man-(1-&gt;4)-alpha-L-Rha-(1-&gt;3)-alpha-D-Gal-di-trans,octa-cis-undecaprenyl diphosphate = alpha-D-Abe-(1-&gt;3)-alpha-D-Man-(1-&gt;4)-alpha-L-Rha-(1-&gt;3)-alpha-D-Gal-di-trans,octa-cis-undecaprenyl diphosphate + CDP + H(+). The protein operates within bacterial outer membrane biogenesis; LPS O-antigen biosynthesis. In terms of biological role, catalyzes the transfer of CDP-abequose on D-mannosyl-L-rhamnosyl-D-galactose-1-diphospholipid to yield D-abequosyl-D-mannosyl-rhamnosyl-D-galactose-1-diphospholipid. The polypeptide is Abequosyltransferase RfbV (rfbV) (Salmonella typhimurium (strain LT2 / SGSC1412 / ATCC 700720)).